The following is a 547-amino-acid chain: Myrosinase 2 (547 aa).

The signal sequence occupies residues 1 to 28 (MQHNTYIYILTMKLLGFALAILLVVATC). 3 cysteine pairs are disulfide-bonded: cysteine 36–cysteine 460, cysteine 44–cysteine 456, and cysteine 236–cysteine 244. A beta-D-glucoside contacts are provided by residues glutamine 69, histidine 171, and 216–217 (NQ). Asparagine 340 is a glycosylation site (N-linked (GlcNAc...) asparagine). Tyrosine 359 is an a beta-D-glucoside binding site. An N-linked (GlcNAc...) asparagine glycan is attached at asparagine 384. Residues glutamate 430, tryptophan 479, 486 to 487 (EF), and phenylalanine 495 each bind a beta-D-glucoside. Glutamate 430 (nucleophile) is an active-site residue. Asparagine 504 carries N-linked (GlcNAc...) asparagine glycosylation.

This sequence belongs to the glycosyl hydrolase 1 family. As to quaternary structure, interacts with MVP1. Expressed in phloem-associated cells.

It catalyses the reaction a thioglucoside + H2O = a sugar + a thiol.. In terms of biological role, may degrade glucosinolates (glucose residue linked by a thioglucoside bound to an amino acid derivative) to glucose, sulfate and any of the products: thiocyanates, isothiocyanates, nitriles, epithionitriles or oxazolidine-2-thiones. These toxic degradation products can deter insect herbivores. Seems to function in abscisic acid (ABA) and methyl jasmonate (MeJA) signaling in guard cells. Functionally redundant with TGG1. The protein is Myrosinase 2 of Arabidopsis thaliana (Mouse-ear cress).